The primary structure comprises 95 residues: Protein TusB (95 aa).

Belongs to the DsrH/TusB family. In terms of assembly, heterohexamer, formed by a dimer of trimers. The hexameric TusBCD complex contains 2 copies each of TusB, TusC and TusD. The TusBCD complex interacts with TusE.

It localises to the cytoplasm. In terms of biological role, part of a sulfur-relay system required for 2-thiolation of 5-methylaminomethyl-2-thiouridine (mnm(5)s(2)U) at tRNA wobble positions. The protein is Protein TusB of Shigella dysenteriae serotype 1 (strain Sd197).